Consider the following 202-residue polypeptide: Lipid A acyltransferase PagP (202 aa).

A signal peptide spans 1-25 (MNYKDIINACILSGVFLLHSPSALA). Catalysis depends on residues His-74, Asp-117, and Ser-118.

It belongs to the lipid A palmitoyltransferase family. In terms of assembly, homodimer.

It is found in the cell outer membrane. It carries out the reaction a lipid A + a 1,2-diacyl-sn-glycero-3-phosphocholine = a hepta-acyl lipid A + a 2-acyl-sn-glycero-3-phosphocholine. It catalyses the reaction a lipid IVA + a 1,2-diacyl-sn-glycero-3-phosphocholine = a lipid IVB + a 2-acyl-sn-glycero-3-phosphocholine. The catalysed reaction is a lipid IIA + a 1,2-diacyl-sn-glycero-3-phosphocholine = a lipid IIB + a 2-acyl-sn-glycero-3-phosphocholine. Transfers a fatty acid residue from the sn-1 position of a phospholipid to the N-linked hydroxyfatty acid chain on the proximal unit of lipid A or its precursors. In Yersinia pseudotuberculosis serotype IB (strain PB1/+), this protein is Lipid A acyltransferase PagP.